The following is a 442-amino-acid chain: D-serine dehydratase (442 aa).

N6-(pyridoxal phosphate)lysine is present on K118.

Belongs to the serine/threonine dehydratase family. DsdA subfamily. Monomer. The cofactor is pyridoxal 5'-phosphate.

The catalysed reaction is D-serine = pyruvate + NH4(+). This is D-serine dehydratase from Escherichia coli O157:H7.